We begin with the raw amino-acid sequence, 174 residues long: 2-C-methyl-D-erythritol 2,4-cyclodiphosphate synthase (174 aa).

Positions 13, 15, and 61 each coordinate a divalent metal cation. 13–15 contacts 4-CDP-2-C-methyl-D-erythritol 2-phosphate; it reads DAH. Residues 75-77, 149-152, F156, and H159 each bind 4-CDP-2-C-methyl-D-erythritol 2-phosphate; these read DIG and TTTD.

It belongs to the IspF family. Homotrimer. A divalent metal cation serves as cofactor.

The catalysed reaction is 4-CDP-2-C-methyl-D-erythritol 2-phosphate = 2-C-methyl-D-erythritol 2,4-cyclic diphosphate + CMP. The protein operates within isoprenoid biosynthesis; isopentenyl diphosphate biosynthesis via DXP pathway; isopentenyl diphosphate from 1-deoxy-D-xylulose 5-phosphate: step 4/6. Its function is as follows. Involved in the biosynthesis of isopentenyl diphosphate (IPP) and dimethylallyl diphosphate (DMAPP), two major building blocks of isoprenoid compounds. Catalyzes the conversion of 4-diphosphocytidyl-2-C-methyl-D-erythritol 2-phosphate (CDP-ME2P) to 2-C-methyl-D-erythritol 2,4-cyclodiphosphate (ME-CPP) with a corresponding release of cytidine 5-monophosphate (CMP). The chain is 2-C-methyl-D-erythritol 2,4-cyclodiphosphate synthase from Bifidobacterium longum (strain NCC 2705).